Reading from the N-terminus, the 246-residue chain is Metallo-beta-lactamase IMP-1 (246 aa).

Positions 1-18 (MSKLSVFFIFLFCSIATA) are cleaved as a signal peptide. Zn(2+) contacts are provided by histidine 95, histidine 97, aspartate 99, histidine 157, and cysteine 176. A beta-lactam-binding residues include lysine 179 and asparagine 185. Histidine 215 provides a ligand contact to Zn(2+).

It belongs to the metallo-beta-lactamase superfamily. Class-B beta-lactamase family. Monomer. It depends on Zn(2+) as a cofactor.

It is found in the periplasm. It carries out the reaction a beta-lactam + H2O = a substituted beta-amino acid. With respect to regulation, inhibited by captopril stereoisomers, Hg(2+), Fe(2+), Cu(2+), chelating agents such as EDTA, dansyl derivatives, including dansyl-C4SH, bisthiazolidines, mercaptoacetic acid and by PMPC phosphonates. Inhibited by 3-(3-mercaptopropionylsulfanyl)-propionic acid pentafluorophenyl ester, via a covalent binding to Lys-179. Not susceptible to inactivation by the beta-lactamase-blocking agents clavulanic acid or cloxacillin. Functionally, class B beta-lactamase which confers resistance to the beta-lactam antibiotics, including penicillins, cephalosporins and carbapenems. Acts via hydrolysis of the beta-lactam ring. Has penicillin-, cephalosporin- and carbapenem-hydrolyzing activities. Has endoribonuclease activity, cleaving substrate RNAs preferentially between U/C and A, in vitro. This chain is Metallo-beta-lactamase IMP-1, found in Serratia marcescens.